A 256-amino-acid polypeptide reads, in one-letter code: 5'-nucleotidase SurE (256 aa).

A divalent metal cation-binding residues include aspartate 8, aspartate 9, serine 40, and asparagine 94.

Belongs to the SurE nucleotidase family. A divalent metal cation is required as a cofactor.

It is found in the cytoplasm. It catalyses the reaction a ribonucleoside 5'-phosphate + H2O = a ribonucleoside + phosphate. Its function is as follows. Nucleotidase that shows phosphatase activity on nucleoside 5'-monophosphates. This Wolbachia pipientis subsp. Culex pipiens (strain wPip) protein is 5'-nucleotidase SurE.